A 276-amino-acid polypeptide reads, in one-letter code: Elongation factor Ts (276 aa).

Residues 81 to 84 form an involved in Mg(2+) ion dislocation from EF-Tu region; it reads TDFV.

Belongs to the EF-Ts family.

Its subcellular location is the cytoplasm. In terms of biological role, associates with the EF-Tu.GDP complex and induces the exchange of GDP to GTP. It remains bound to the aminoacyl-tRNA.EF-Tu.GTP complex up to the GTP hydrolysis stage on the ribosome. The chain is Elongation factor Ts from Leifsonia xyli subsp. xyli (strain CTCB07).